A 360-amino-acid chain; its full sequence is Replication-associated protein (360 aa).

One can recognise a CRESS-DNA virus Rep endonuclease domain in the interval 11 to 114; it reads SHRNANTFLT…PLAVFERGTF (104 aa). Positions 18–21 match the RCR-1 motif; that stretch reads FLTY. The a divalent metal cation site is built by Glu52, His60, and His62. The RCR-2 signature appears at 60 to 62; sequence HLH. The For DNA cleavage activity role is filled by Tyr100. Positions 100–103 match the RCR-3 motif; that stretch reads YILK. An a divalent metal cation-binding site is contributed by Glu104. The oligomerization stretch occupies residues 175–187; that stretch reads SANKLFPEIQEEF. 229 to 236 is a binding site for ATP; sequence GPTRTGKS. Residues 252 to 270 are transactivation; that stretch reads VDWSSYNEDAIYNIVDDIP. A Nuclear localization signal motif is present at residues 292 to 303; the sequence is KYGKKKKVQKKS.

The protein belongs to the geminiviridae Rep protein family. As to quaternary structure, homooligomer. Rep binds to repeated DNA motifs (iterons). Forms the O-complex, which is a Rep-DNA complex involved in the initiation of RCR. Part of the C- and V-complexes which are RepA-Rep-DNA complexes involved in the c-sense and v-sense transcription. It depends on Mg(2+) as a cofactor. Requires Mn(2+) as cofactor.

Its subcellular location is the host nucleus. Its function is as follows. Essential for the replication of viral ssDNA. The closed circular ssDNA genome is first converted to a superhelical dsDNA. Rep binds a specific region at the genome origin of replication. It introduces an endonucleolytic nick within the conserved sequence 5'-TAATATTAC-3' in the intergenic region of the genome present in all geminiviruses, thereby initiating the rolling circle replication (RCR). Following cleavage, binds covalently to the 5'-phosphate of DNA as a tyrosyl ester. The cleavage gives rise to a free 3'-OH that serves as a primer for the cellular DNA polymerase. The polymerase synthesizes the (+) strand DNA by rolling circle mechanism. After one round of replication, a Rep-catalyzed nucleotidyl transfer reaction releases a circular single-stranded virus genome, thereby terminating the replication. Displays origin-specific DNA cleavage, nucleotidyl transferase, ATPase and helicase activities. Acts as an inhibitor of C-sense gene transcription. This chain is Replication-associated protein, found in Maize streak virus genotype A (isolate Nigeria) (MSV).